The chain runs to 225 residues: GTP-binding nuclear protein Ran (225 aa).

The 165-residue stretch at valine 8–aspartate 172 folds into the Small GTPase Ran-type domain. Aspartate 19–threonine 26 contacts GTP. Residues lysine 38–valine 46 are switch-I. Residues glycine 69, asparagine 123 to aspartate 126, and serine 151 to lysine 153 each bind GTP. A switch-II region spans residues glycine 69 to asparagine 85.

This sequence belongs to the small GTPase superfamily. Ran family. In terms of assembly, monomer. Found in a nuclear export complex with RanGTP, exportin and pre-miRNA.

The protein resides in the nucleus. GTP-binding protein involved in nucleocytoplasmic transport. Required for the import of protein into the nucleus and also for RNA export. Involved in chromatin condensation and control of cell cycle. This Tetrahymena thermophila protein is GTP-binding nuclear protein Ran.